Consider the following 110-residue polypeptide: Antimicrobial peptide microplusin (110 aa).

Residues 1-20 form the signal peptide; that stretch reads MKAIFVSALLVVALVASTSA. Intrachain disulfides connect C26–C72, C39–C100, and C61–C66.

In terms of tissue distribution, expressed in the hemocytes, fat body and ovaries.

It localises to the secreted. Its function is as follows. Has bacteriostatic activity against the Gram-positive bacterium M.luteus, but not against Gram-negative bacterium E.coli SBS363. Has fungistatic activity against C.neoformans, but not C.albicans. Binds and sequesters copper and iron ions. Copper-chelating is crucial for antimicrobial activity against M.luteus. This Rhipicephalus microplus (Cattle tick) protein is Antimicrobial peptide microplusin.